Consider the following 219-residue polypeptide: MYDNALHIRHLGKQDYESVWHAMQHYTDNRDENSQDEIWIVEHTPVFTQGQAGKSEHILNPGDIPVIQVDRGGQVTYHGPGQLVVYPLLDIKRLKVGVRQLVTHIEQSIINMLKRYQIEAYAKADAPGVYVEERKIASLGLRIRKGCSFHGLALNVDMDMSPFQRINPCGYAGMEMIQCKQLGGPQTVEEAGAQLIETLSQELGLDKLVHHQGLPESYE.

A BPL/LPL catalytic domain is found at 32-207 (ENSQDEIWIV…TLSQELGLDK (176 aa)). Residues 71–78 (RGGQVTYH), 138–140 (SLG), and 151–153 (GLA) each bind substrate. Cys-169 serves as the catalytic Acyl-thioester intermediate.

The protein belongs to the LipB family.

It localises to the cytoplasm. The enzyme catalyses octanoyl-[ACP] + L-lysyl-[protein] = N(6)-octanoyl-L-lysyl-[protein] + holo-[ACP] + H(+). Its pathway is protein modification; protein lipoylation via endogenous pathway; protein N(6)-(lipoyl)lysine from octanoyl-[acyl-carrier-protein]: step 1/2. Catalyzes the transfer of endogenously produced octanoic acid from octanoyl-acyl-carrier-protein onto the lipoyl domains of lipoate-dependent enzymes. Lipoyl-ACP can also act as a substrate although octanoyl-ACP is likely to be the physiological substrate. The protein is Octanoyltransferase of Shewanella pealeana (strain ATCC 700345 / ANG-SQ1).